The primary structure comprises 512 residues: Maturase K (512 aa).

It belongs to the intron maturase 2 family. MatK subfamily.

Its subcellular location is the plastid. The protein resides in the chloroplast. In terms of biological role, usually encoded in the trnK tRNA gene intron. Probably assists in splicing its own and other chloroplast group II introns. In Lilium regale (Regal lily), this protein is Maturase K.